A 449-amino-acid chain; its full sequence is MNSHTKQKIGVFGLGKTGISVYEELQGKCDVIVYDDLKANRDIFEELYTNNSIAALSDSRWQNLDKIVLSPGIPLTHKIAGIAKNFNIPIISDIDLLFEKSKNLNFIAVTGTNGKSTTTALISHILNSNGLDYPVAGNIGVPALQAKASKDGYILELSSFQLDLVKTFTAKIAVLLNITPDHLDRHQDMTGYIAAKSKIFDRMDKDSYAAINIDNYYCREIFMLLQQEQRIKLIPFSVTKILKNGISVVGDKINDNDISYKLPFNKNLQGTHNCENIAASYAVAKIIGVESKKILESISSFQSLPHRMQYIGSINNIGFYNDSKATNAISAVQSIKALDNIYWLAGGIPKEGGIEEIKPYFSKIKKAYFYGQAKEIFAKTAKNIVDFVICDNLEQAFDLAYKDAVGDNAEVKNILLAPSCSSYDQFKNFEERGELFMKLSKRHCEEITK.

111-117 (GTNGKST) is a binding site for ATP.

The protein belongs to the MurCDEF family.

Its subcellular location is the cytoplasm. The enzyme catalyses UDP-N-acetyl-alpha-D-muramoyl-L-alanine + D-glutamate + ATP = UDP-N-acetyl-alpha-D-muramoyl-L-alanyl-D-glutamate + ADP + phosphate + H(+). It participates in cell wall biogenesis; peptidoglycan biosynthesis. Functionally, cell wall formation. Catalyzes the addition of glutamate to the nucleotide precursor UDP-N-acetylmuramoyl-L-alanine (UMA). The protein is UDP-N-acetylmuramoylalanine--D-glutamate ligase of Rickettsia felis (strain ATCC VR-1525 / URRWXCal2) (Rickettsia azadi).